A 255-amino-acid polypeptide reads, in one-letter code: 2-(S)-hydroxypropyl-CoM dehydrogenase 3 (255 aa).

Residues Ile-19, Asp-38, 64 to 65 (DV), and Asn-91 each bind NAD(+). (S)-2-hydroxypropyl-coenzyme M-binding residues include Ser-143 and Tyr-156. The Proton acceptor role is filled by Tyr-156. Lys-160 is a binding site for NAD(+). Thr-188 contributes to the (S)-2-hydroxypropyl-coenzyme M binding site. 189-193 (VTSTG) provides a ligand contact to NAD(+). Tyr-215 is a binding site for (S)-2-hydroxypropyl-coenzyme M.

It belongs to the short-chain dehydrogenases/reductases (SDR) family. In terms of assembly, homotetramer.

The enzyme catalyses (S)-2-hydroxypropyl-coenzyme M + NAD(+) = 2-oxopropyl-coenzyme M + NADH + H(+). Its activity is regulated as follows. Not inhibited by 2-(2-methyl-2-hydroxypropylthio)ethanesulfonate (M-HPC), an achiral analog of both R-HPC and S-HPC. Its function is as follows. Involved in aliphatic epoxide carboxylation. Catalyzes the reversible oxidation of (2S)-2-hydroxypropyl-coenzyme M (S-HPC) to 2-oxopropyl-coenzyme M (2-KPC). The enzyme is highly specific for the S enantiomers. In vitro can also use the aliphatic ketone 2-butanone and the aliphatic alcohol 2-propanol, and shows an inherent stereoselectivity for 2-butanone reduction. In Xanthobacter autotrophicus (strain ATCC BAA-1158 / Py2), this protein is 2-(S)-hydroxypropyl-CoM dehydrogenase 3.